The sequence spans 261 residues: 1-(5-phosphoribosyl)-5-[(5-phosphoribosylamino)methylideneamino] imidazole-4-carboxamide isomerase (261 aa).

Catalysis depends on Asp-8, which acts as the Proton acceptor. Asp-139 serves as the catalytic Proton donor.

The protein belongs to the HisA/HisF family.

The protein localises to the cytoplasm. The enzyme catalyses 1-(5-phospho-beta-D-ribosyl)-5-[(5-phospho-beta-D-ribosylamino)methylideneamino]imidazole-4-carboxamide = 5-[(5-phospho-1-deoxy-D-ribulos-1-ylimino)methylamino]-1-(5-phospho-beta-D-ribosyl)imidazole-4-carboxamide. Its pathway is amino-acid biosynthesis; L-histidine biosynthesis; L-histidine from 5-phospho-alpha-D-ribose 1-diphosphate: step 4/9. This Janthinobacterium sp. (strain Marseille) (Minibacterium massiliensis) protein is 1-(5-phosphoribosyl)-5-[(5-phosphoribosylamino)methylideneamino] imidazole-4-carboxamide isomerase.